A 219-amino-acid chain; its full sequence is Ribose-5-phosphate isomerase A (219 aa).

Substrate-binding positions include 28-31 (SGST), 81-84 (DGAD), and 94-97 (KGGG). Glu-103 (proton acceptor) is an active-site residue. Lys-121 serves as a coordination point for substrate.

The protein belongs to the ribose 5-phosphate isomerase family. As to quaternary structure, homodimer.

It carries out the reaction aldehydo-D-ribose 5-phosphate = D-ribulose 5-phosphate. It functions in the pathway carbohydrate degradation; pentose phosphate pathway; D-ribose 5-phosphate from D-ribulose 5-phosphate (non-oxidative stage): step 1/1. In terms of biological role, catalyzes the reversible conversion of ribose-5-phosphate to ribulose 5-phosphate. This Haemophilus influenzae (strain PittEE) protein is Ribose-5-phosphate isomerase A.